A 136-amino-acid polypeptide reads, in one-letter code: Urease subunit beta (136 aa).

This sequence belongs to the urease beta subunit family. As to quaternary structure, heterotrimer of UreA (gamma), UreB (beta) and UreC (alpha) subunits. Three heterotrimers associate to form the active enzyme.

The protein resides in the cytoplasm. It catalyses the reaction urea + 2 H2O + H(+) = hydrogencarbonate + 2 NH4(+). Its pathway is nitrogen metabolism; urea degradation; CO(2) and NH(3) from urea (urease route): step 1/1. This Staphylococcus aureus (strain Mu3 / ATCC 700698) protein is Urease subunit beta.